A 275-amino-acid chain; its full sequence is Bis(5'-nucleosyl)-tetraphosphatase, symmetrical (275 aa).

This sequence belongs to the Ap4A hydrolase family.

It carries out the reaction P(1),P(4)-bis(5'-adenosyl) tetraphosphate + H2O = 2 ADP + 2 H(+). Its function is as follows. Hydrolyzes diadenosine 5',5'''-P1,P4-tetraphosphate to yield ADP. This chain is Bis(5'-nucleosyl)-tetraphosphatase, symmetrical, found in Stutzerimonas stutzeri (strain A1501) (Pseudomonas stutzeri).